The following is a 120-amino-acid chain: Holo-[acyl-carrier-protein] synthase (120 aa).

Residues aspartate 8 and glutamate 60 each contribute to the Mg(2+) site.

Belongs to the P-Pant transferase superfamily. AcpS family. Requires Mg(2+) as cofactor.

Its subcellular location is the cytoplasm. The enzyme catalyses apo-[ACP] + CoA = holo-[ACP] + adenosine 3',5'-bisphosphate + H(+). Its function is as follows. Transfers the 4'-phosphopantetheine moiety from coenzyme A to a Ser of acyl-carrier-protein. In Anaplasma marginale (strain Florida), this protein is Holo-[acyl-carrier-protein] synthase.